The chain runs to 696 residues: Polyribonucleotide nucleotidyltransferase (696 aa).

Mg(2+) is bound by residues Asp483 and Asp489. The region spanning 550–609 (PRITTIYVKTDKIRDVIGSGGKNIRGITEATGVTIDIDDTGKINIASTDKAACDLAIKMI) is the KH domain. Positions 619–687 (GKLYMGLVKK…KQGKIKLSRK (69 aa)) constitute an S1 motif domain.

It belongs to the polyribonucleotide nucleotidyltransferase family. Requires Mg(2+) as cofactor.

The protein localises to the cytoplasm. The catalysed reaction is RNA(n+1) + phosphate = RNA(n) + a ribonucleoside 5'-diphosphate. Functionally, involved in mRNA degradation. Catalyzes the phosphorolysis of single-stranded polyribonucleotides processively in the 3'- to 5'-direction. This is Polyribonucleotide nucleotidyltransferase from Geotalea uraniireducens (strain Rf4) (Geobacter uraniireducens).